A 172-amino-acid chain; its full sequence is NADH-ubiquinone oxidoreductase chain 6 (172 aa).

The next 5 helical transmembrane spans lie at 1 to 21, 24 to 44, 53 to 73, 86 to 106, and 140 to 160; these read MAFYLSFLMAALVGGMIAIAS, APYFAAFGLVVVAGVGCGILV, LILFLIYLGGMLVVFAYSAAL, VVFWRVMVYGLVVIVAAGFLL, and GKMLVICAWVLLLTLFVVLEV.

This sequence belongs to the complex I subunit 6 family. As to quaternary structure, core subunit of respiratory chain NADH dehydrogenase (Complex I) which is composed of 45 different subunits.

It is found in the mitochondrion inner membrane. It catalyses the reaction a ubiquinone + NADH + 5 H(+)(in) = a ubiquinol + NAD(+) + 4 H(+)(out). Its function is as follows. Core subunit of the mitochondrial membrane respiratory chain NADH dehydrogenase (Complex I) which catalyzes electron transfer from NADH through the respiratory chain, using ubiquinone as an electron acceptor. Essential for the catalytic activity and assembly of complex I. The chain is NADH-ubiquinone oxidoreductase chain 6 (mt-nd6) from Danio rerio (Zebrafish).